Consider the following 456-residue polypeptide: tRNA-2-methylthio-N(6)-dimethylallyladenosine synthase (456 aa).

The region spanning 19–137 is the MTTase N-terminal domain; the sequence is KHFFIETWGC…FPEYLHRVQV (119 aa). [4Fe-4S] cluster is bound by residues cysteine 28, cysteine 64, cysteine 98, cysteine 174, cysteine 178, and cysteine 181. The Radical SAM core domain maps to 160–392; it reads RKSNVKAFVT…AVNEGIVVGN (233 aa). One can recognise a TRAM domain in the interval 393-456; it reads KAAEGKIYEV…SFSLVGEVVE (64 aa).

Belongs to the methylthiotransferase family. MiaB subfamily. As to quaternary structure, monomer. The cofactor is [4Fe-4S] cluster.

It is found in the cytoplasm. It catalyses the reaction N(6)-dimethylallyladenosine(37) in tRNA + (sulfur carrier)-SH + AH2 + 2 S-adenosyl-L-methionine = 2-methylsulfanyl-N(6)-dimethylallyladenosine(37) in tRNA + (sulfur carrier)-H + 5'-deoxyadenosine + L-methionine + A + S-adenosyl-L-homocysteine + 2 H(+). Its function is as follows. Catalyzes the methylthiolation of N6-(dimethylallyl)adenosine (i(6)A), leading to the formation of 2-methylthio-N6-(dimethylallyl)adenosine (ms(2)i(6)A) at position 37 in tRNAs that read codons beginning with uridine. The protein is tRNA-2-methylthio-N(6)-dimethylallyladenosine synthase of Clostridium botulinum (strain Eklund 17B / Type B).